Here is a 294-residue protein sequence, read N- to C-terminus: Homeobox protein HD1 (294 aa).

The region spanning 197–217 is the ELK domain; that stretch reads ELKLELKQGFKSRIEDVREEI. Residues 218–281 constitute a DNA-binding region (homeobox; TALE-type); the sequence is MRKRRAGKLP…NQRKRNWHNN (64 aa).

It belongs to the TALE/KNOX homeobox family. In terms of tissue distribution, in roots, stems and cotyledons of one-week old seedlings. In mature plants, in young leaves from first level below flowers as well as in flower buds and open flowers.

Its subcellular location is the nucleus. Possible developmental regulator. The chain is Homeobox protein HD1 (HD1) from Brassica napus (Rape).